The sequence spans 854 residues: MAQAIFEALEGMDNQTVLAVQSLLDGQGAVPDPTGQSVNAPPAIQPLDDEDVFLCGKCKKQFNSLPAFMTHKREQCQGNAPALATVSLATNSIYPPSAAPTAVQQAPTPANRQISTYITVPPSPLIQTLVQGNILVSDDVLMSAMSAFTSLDQPMPQGPPPVQSSLNMHSVPSYLTQPPPPPPPPPPLPPPPPPQPPPPPPQSLGPPGRPNPGGNGVVEVYSAAAPLAGSGTVEIQALGMQPYPPLEVPNQCVEPPVYPTPTVYSPGKQGFKPKGPNPAAPMTSATGGTVATFDSPATLKTRRAKGARGLPEAAGKPKAQKLKCSYCDKSFTKNFDLQQHIRSHTGEKPFQCIACGRAFAQKSNVKKHMQTHKVWPPGHSGGTVSRNSVTVQVMALNPSRQEDEESTGLGQPLPGAPQPQALSTAGEEEGDKPESKQVVLIDSSYLCQFCPSKFSTYFQLKSHMTQHKNEQVYKCVVKSCAQTFPKLDTFLEHIKSHQEELSYRCHLCGKDFPSLYDLGVHQYSHSLLPQHSPKKDNAVYKCVKCVNKYSTPEALEHHLQTATHNFPCPHCQKVFPCERYLRRHLPTHGSGGRFKCQVCKKFFRREHYLKLHAHIHSGEKPYKCSVCESAFNRKDKLKRHMLIHEPFKKYKCPFSTHTGCSKEFNRPDKLKAHILSHSGMKLHKCALCSKSFSRRAHLAEHQRAHTGNYKFRCAGCAKGFSRHKYLKDHRCRLGPQKDKDLQTRRPPQRRAAPRSCGSGGRKVLTPLPDPLGLEELKDTGAGLVPEAVPGKPPFAEPDAVLSIVVGGAVGAETELVVPGHAEGLGSNLALAELQAGAEGPCAMLAVPVYIQASE.

The segment at 53–76 (FLCGKCKKQFNSLPAFMTHKREQC) adopts a C2H2-type 1; atypical zinc-finger fold. Residues 152–217 (DQPMPQGPPP…GRPNPGGNGV (66 aa)) form a disordered region. The segment covering 163-176 (QSSLNMHSVPSYLT) has biased composition (polar residues). Positions 177–210 (QPPPPPPPPPPLPPPPPPQPPPPPPQSLGPPGRP) are enriched in pro residues. C2H2-type zinc fingers lie at residues 322–344 (LKCS…IRSH) and 350–372 (FQCI…MQTH). The segment at 399–434 (SRQEDEESTGLGQPLPGAPQPQALSTAGEEEGDKPE) is disordered. Residues 408–422 (GLGQPLPGAPQPQAL) are compositionally biased toward low complexity. 9 C2H2-type zinc fingers span residues 445–467 (YLCQ…MTQH), 473–497 (YKCV…IKSH), 503–525 (YRCH…QYSH), 540–564 (YKCV…TATH), 566–588 (FPCP…LPTH), 594–616 (FKCQ…AHIH), 622–644 (YKCS…MLIH), 650–677 (YKCP…ILSH), and 683–705 (HKCA…QRAH). The disordered stretch occupies residues 731–763 (CRLGPQKDKDLQTRRPPQRRAAPRSCGSGGRKV).

It belongs to the krueppel C2H2-type zinc-finger protein family. Binds DNA and to the STAT3 promoter.

The protein resides in the nucleus. Functionally, transcriptional activator of STAT3 involved in the regulation of immune homeostasis. Also able to activate STAT1 transcription. In Homo sapiens (Human), this protein is Zinc finger protein 341 (ZNF341).